We begin with the raw amino-acid sequence, 173 residues long: Ribosome maturation factor RimM (173 aa).

The region spanning 92–165 (EGEFYHADLI…RVVIEAPAEI (74 aa)) is the PRC barrel domain.

The protein belongs to the RimM family. Binds ribosomal protein uS19.

Its subcellular location is the cytoplasm. Its function is as follows. An accessory protein needed during the final step in the assembly of 30S ribosomal subunit, possibly for assembly of the head region. Essential for efficient processing of 16S rRNA. May be needed both before and after RbfA during the maturation of 16S rRNA. It has affinity for free ribosomal 30S subunits but not for 70S ribosomes. This is Ribosome maturation factor RimM from Nitrobacter winogradskyi (strain ATCC 25391 / DSM 10237 / CIP 104748 / NCIMB 11846 / Nb-255).